The following is a 1317-amino-acid chain: Toxin protein Tse5 (1317 aa).

Residues 395 to 419 (GRETRRRRDGQGRMLEEESPGKARY) form a disordered region. The span at 403 to 415 (DGQGRMLEEESPG) shows a compositional bias: basic and acidic residues.

Functionally, toxin secreted by the H1 type VI (H1-T6SS) secretion system that acts on bacterial target cells. The producing bacterium is protected by a cognate immunity protein. The polypeptide is Toxin protein Tse5 (Pseudomonas aeruginosa (strain ATCC 15692 / DSM 22644 / CIP 104116 / JCM 14847 / LMG 12228 / 1C / PRS 101 / PAO1)).